Consider the following 429-residue polypeptide: Glutamate-1-semialdehyde 2,1-aminomutase (429 aa).

The residue at position 264 (Lys-264) is an N6-(pyridoxal phosphate)lysine.

Belongs to the class-III pyridoxal-phosphate-dependent aminotransferase family. HemL subfamily. Homodimer. Requires pyridoxal 5'-phosphate as cofactor.

The protein resides in the cytoplasm. The enzyme catalyses (S)-4-amino-5-oxopentanoate = 5-aminolevulinate. It participates in porphyrin-containing compound metabolism; protoporphyrin-IX biosynthesis; 5-aminolevulinate from L-glutamyl-tRNA(Glu): step 2/2. This chain is Glutamate-1-semialdehyde 2,1-aminomutase, found in Campylobacter curvus (strain 525.92).